The chain runs to 186 residues: Probable chorismate pyruvate-lyase (186 aa).

Arginine 80, leucine 118, and glutamate 170 together coordinate substrate.

This sequence belongs to the UbiC family.

The protein resides in the cytoplasm. It carries out the reaction chorismate = 4-hydroxybenzoate + pyruvate. Its pathway is cofactor biosynthesis; ubiquinone biosynthesis. Its function is as follows. Removes the pyruvyl group from chorismate, with concomitant aromatization of the ring, to provide 4-hydroxybenzoate (4HB) for the ubiquinone pathway. This Pseudomonas syringae pv. tomato (strain ATCC BAA-871 / DC3000) protein is Probable chorismate pyruvate-lyase.